Reading from the N-terminus, the 540-residue chain is Protein SOSEKI 3 (540 aa).

The DIX-like oligomerization domain stretch occupies residues 32-123; that stretch reads KKVQIVYYLS…YVLKGSELFD (92 aa). Disordered stretches follow at residues 147 to 201 and 219 to 294; these read EPPS…DAKN and ADAS…SSLG. Low complexity-rich tracts occupy residues 150–163 and 185–194; these read SSRSMDDSSSSSSM and RSVSSSGVSP. Positions 221-244 are enriched in polar residues; it reads ASTQTDETVSGRSKTPIETFSRGV. The segment covering 246–256 has biased composition (acidic residues); it reads TDEDVSSEPET. Over residues 280-292 the composition is skewed to low complexity; sequence NSVSPPFSNSASS. The short motif at 342–343 is the Association to cell membranes element; that stretch reads CG. Residues 412–492 are disordered; it reads KKDAADSNAS…KNIPCTTKTH (81 aa). Residues 418-437 show a composition bias toward polar residues; that stretch reads SNASLKRSSSYNGDRASNQM. Basic and acidic residues predominate over residues 471-482; it reads SEKRRDSSEDTT.

This sequence belongs to the SOSEKI family. In terms of assembly, homodimer. Forms long polymer filaments with other SOKs proteins polymers (e.g. SOK1, SOK2, SOK3 and SOK4) crucial for polar localization and biological activity. Binds to ANGUSTIFOLIA (AN). Expressed during embryogenesis and in roots.

Its subcellular location is the cell membrane. Functionally, SOSEKI proteins (SOK1-5) locally interpret global polarity cues and can influence cell division orientation to coordinate cell polarization relative to body axes, probably by guiding ANGUSTIFOLIA (AN) polarized localization. The polypeptide is Protein SOSEKI 3 (Arabidopsis thaliana (Mouse-ear cress)).